The chain runs to 334 residues: Beta-hexosaminidase (334 aa).

Substrate contacts are provided by residues Asp57, Arg65, Arg128, and Lys158–His159. The Proton donor/acceptor role is filled by His171. The active-site Nucleophile is the Asp242.

This sequence belongs to the glycosyl hydrolase 3 family. NagZ subfamily.

It is found in the cytoplasm. The catalysed reaction is Hydrolysis of terminal non-reducing N-acetyl-D-hexosamine residues in N-acetyl-beta-D-hexosaminides.. It participates in cell wall biogenesis; peptidoglycan recycling. In terms of biological role, plays a role in peptidoglycan recycling by cleaving the terminal beta-1,4-linked N-acetylglucosamine (GlcNAc) from peptide-linked peptidoglycan fragments, giving rise to free GlcNAc, anhydro-N-acetylmuramic acid and anhydro-N-acetylmuramic acid-linked peptides. The polypeptide is Beta-hexosaminidase (Methylococcus capsulatus (strain ATCC 33009 / NCIMB 11132 / Bath)).